The primary structure comprises 399 residues: uncharacterized protein (399 aa).

Residues 254 to 335 (SRVSTGDTSP…FFRDSDDDGD (82 aa)) are disordered. The span at 255-264 (RVSTGDTSPY) shows a compositional bias: polar residues. Residues 310 to 329 (RNAEMKKSHSANDSEEFFRD) are compositionally biased toward basic and acidic residues.

This is an uncharacterized protein from Xenopus laevis (African clawed frog).